The primary structure comprises 439 residues: MQSYFDQLEQVHYEGPTSNNPLAFHHYNPDELVLGKRMAEHLRFAACYWHTFCWNGADMFGVGSFDRPWQQPGDALTLAKRKADVAFEFFHKLNVPYYCFHDVDVSPEGASLKEYLHNFAVMTDVLEEKQHSSGVKLLWGTANCFTHPRYGAGAATNPDPEVFSWAATQVFTAMNATQRLGGENYVLWGGREGYETLLNTDLRQEREQIGRFMQMVVEHKHKTGFQGTLLIEPKPQEPTKHQYDYDVATVYGFLKQFGLEKEIKVNIEANHATLAGHSFHHEIATAIALGIFGSVDANRGDPQLGWDTDQFPISVEENALVMFEILKAGGFTTGGLNFDAKVRRQSTDKYDLFYGHIGAMDTMALALKVAAKMVTDGQLHQQVSKRYAGWNGELGQQILQGKLSLEALAQYAEGHALAPQHVSGRQEQLENLMNRYLFG.

Active-site residues include His-101 and Asp-104. Mg(2+)-binding residues include Glu-232, Glu-268, His-271, Asp-296, Asp-307, Asp-309, and Asp-339.

Belongs to the xylose isomerase family. In terms of assembly, homotetramer. It depends on Mg(2+) as a cofactor.

The protein resides in the cytoplasm. The catalysed reaction is alpha-D-xylose = alpha-D-xylulofuranose. In Serratia proteamaculans (strain 568), this protein is Xylose isomerase.